The sequence spans 274 residues: Bis(5'-nucleosyl)-tetraphosphatase, symmetrical (274 aa).

Belongs to the Ap4A hydrolase family.

It catalyses the reaction P(1),P(4)-bis(5'-adenosyl) tetraphosphate + H2O = 2 ADP + 2 H(+). Functionally, hydrolyzes diadenosine 5',5'''-P1,P4-tetraphosphate to yield ADP. In Shewanella loihica (strain ATCC BAA-1088 / PV-4), this protein is Bis(5'-nucleosyl)-tetraphosphatase, symmetrical.